The sequence spans 317 residues: Glycine--tRNA ligase alpha subunit (317 aa).

The protein belongs to the class-II aminoacyl-tRNA synthetase family. Tetramer of two alpha and two beta subunits.

Its subcellular location is the cytoplasm. The enzyme catalyses tRNA(Gly) + glycine + ATP = glycyl-tRNA(Gly) + AMP + diphosphate. The sequence is that of Glycine--tRNA ligase alpha subunit from Lactococcus lactis subsp. cremoris (strain SK11).